An 81-amino-acid polypeptide reads, in one-letter code: Photosystem I iron-sulfur center (81 aa).

4Fe-4S ferredoxin-type domains are found at residues 2–31 (SHSV…MVPW) and 37–68 (GQIA…VRVY). Residues Cys11, Cys14, Cys17, Cys21, Cys48, Cys51, Cys54, and Cys58 each coordinate [4Fe-4S] cluster.

The cyanobacterial PSI reaction center is composed of one copy each of PsaA,B,C,D,E,F,I,J,K,L,M and X, and forms trimeric complexes. It depends on [4Fe-4S] cluster as a cofactor.

It localises to the cellular thylakoid membrane. It carries out the reaction reduced [plastocyanin] + hnu + oxidized [2Fe-2S]-[ferredoxin] = oxidized [plastocyanin] + reduced [2Fe-2S]-[ferredoxin]. Functionally, apoprotein for the two 4Fe-4S centers FA and FB of photosystem I (PSI); essential for photochemical activity. FB is the terminal electron acceptor of PSI, donating electrons to ferredoxin. The C-terminus interacts with PsaA/B/D and helps assemble the protein into the PSI complex. Required for binding of PsaD and PsaE to PSI. PSI is a plastocyanin/cytochrome c6-ferredoxin oxidoreductase, converting photonic excitation into a charge separation, which transfers an electron from the donor P700 chlorophyll pair to the spectroscopically characterized acceptors A0, A1, FX, FA and FB in turn. The polypeptide is Photosystem I iron-sulfur center (Prochlorococcus marinus (strain SARG / CCMP1375 / SS120)).